A 320-amino-acid chain; its full sequence is Glucosaminate ammonia-lyase (320 aa).

36 to 43 (TGMQAGGQ) is an FAD binding site. A disulfide bond links Cys136 and Cys139. 285–294 (DVADHVYRQA) is a binding site for FAD.

Belongs to the class-II pyridine nucleotide-disulfide oxidoreductase family.

The catalysed reaction is 2-amino-2-deoxy-D-gluconate = 2-dehydro-3-deoxy-D-gluconate + NH4(+). Its function is as follows. Catalyzes the conversion of 2-amino-2-deoxy-D-gluconate (GlcNA) to 2-keto-3-deoxy-D-gluconic acid (KDGA) and ammonia. In Pseudomonas fluorescens, this protein is Glucosaminate ammonia-lyase.